We begin with the raw amino-acid sequence, 317 residues long: 4-diphosphocytidyl-2-C-methyl-D-erythritol kinase (317 aa).

The active site involves Lys-11. Residue 99–109 participates in ATP binding; sequence PVAAGLAGGST. Asp-141 is an active-site residue.

It belongs to the GHMP kinase family. IspE subfamily.

The enzyme catalyses 4-CDP-2-C-methyl-D-erythritol + ATP = 4-CDP-2-C-methyl-D-erythritol 2-phosphate + ADP + H(+). Its pathway is isoprenoid biosynthesis; isopentenyl diphosphate biosynthesis via DXP pathway; isopentenyl diphosphate from 1-deoxy-D-xylulose 5-phosphate: step 3/6. In terms of biological role, catalyzes the phosphorylation of the position 2 hydroxy group of 4-diphosphocytidyl-2C-methyl-D-erythritol. The sequence is that of 4-diphosphocytidyl-2-C-methyl-D-erythritol kinase from Nostoc sp. (strain PCC 7120 / SAG 25.82 / UTEX 2576).